The following is a 1839-amino-acid chain: DNA-directed RNA polymerase II subunit RPB1 (1839 aa).

Zn(2+) contacts are provided by C66, C69, C76, H79, C106, C109, and C147. A disordered region spans residues 152–174 (DIDDVQSHSTDEPVKKSRGGCGA). Over residues 156–166 (VQSHSTDEPVK) the composition is skewed to basic and acidic residues. C172 provides a ligand contact to Zn(2+). A DNA-binding region spans residues 326-397 (TQKSGRPIKS…PETVTPYNIE (72 aa)). D495, D497, and D499 together coordinate Mg(2+). Positions 785–795 (GQQNVEGKRIP) are alpha-amanitin binding. The segment at 829 to 841 (PQEFFFHAMGGRE) is bridging helix. Positions 1538–1726 (PSSSPGYSPS…PSYGPTSPSY (189 aa)) are enriched in low complexity. The disordered stretch occupies residues 1538-1839 (PSSSPGYSPS…DASKDDKGNP (302 aa)). 27 repeat units span residues 1544 to 1550 (YSPSSPG), 1551 to 1557 (YSPTSPG), 1558 to 1564 (YSPTSPG), 1565 to 1571 (YSPTSPG), 1572 to 1578 (YSPTSPT), 1579 to 1585 (YSPSSPG), 1586 to 1592 (YSPTSPA), 1593 to 1599 (YSPTSPS), 1600 to 1606 (YSPTSPS), 1607 to 1613 (YSPTSPS), 1614 to 1620 (YSPTSPS), 1621 to 1627 (YSPTSPS), 1628 to 1634 (YSPTSPS), 1635 to 1641 (YSPTSPA), 1642 to 1648 (YSPTSPA), 1649 to 1655 (YSPTSPA), 1656 to 1662 (YSPTSPS), 1663 to 1669 (YSPTSPS), 1670 to 1676 (YSPTSPS), 1677 to 1683 (YSPTSPS), 1684 to 1690 (YSPTSPS), 1691 to 1697 (YSPTSPA), 1698 to 1704 (YSPTSPG), 1705 to 1711 (YSPTSPS), 1712 to 1718 (YSPTSPS), 1719 to 1725 (YGPTSPS), and 1726 to 1732 (YNPQSAK). Residues 1544–1813 (YSPSSPGYSP…LPGYSPSSTG (270 aa)) form a C-terminal domain (CTD); 37 X 7 AA tandem approximate repeats of Y-[GNS]-P-[QST]-[LNS]-[APT]-[AGKNRSTY] region. Positions 1727-1745 (NPQSAKYSPSIAYSPSNAR) are enriched in polar residues. One copy of the 28; approximate repeat lies at 1733–1738 (YSPSIA). 6 repeat units span residues 1739–1745 (YSPSNAR), 1752–1758 (YSPTSPN), 1759–1765 (YSPTSPS), 1766–1772 (YSPTSPS), 1773–1779 (YSPSSPT), and 1780–1786 (YSPSSPY). Residues 1747–1798 (SPASPYSPTSPNYSPTSPSYSPTSPSYSPSSPTYSPSSPYSSGASPDYSPSA) are compositionally biased toward low complexity. Residues 1794 to 1799 (YSPSAG) form a 35; approximate repeat. Tandem repeats lie at residues 1800-1806 (YSPTLPG) and 1807-1813 (YSPSSTG). Residues 1818-1839 (HEGDKKDKTGKKDASKDDKGNP) are compositionally biased toward basic and acidic residues.

Belongs to the RNA polymerase beta' chain family. In terms of assembly, component of the RNA polymerase II (Pol II) complex consisting of at least 12 subunits. Interacts with RDM1. Interacts (via CTD) with PRP40A, PRP40B, PRP40C and CYP59. Interacts with MEE12/CCG1 and MEE14/CBP1. Binds (via CTD) to ATX1, especially when phosphorylated on 'Ser-5' of the heptapeptide repeat. The tandem 7 residues repeats in the C-terminal domain (CTD) can be highly phosphorylated. The phosphorylation activates Pol II. Phosphorylation occurs mainly at residues 'Ser-2' and 'Ser-5' of the heptapeptide repeat. The phosphorylation state is believed to result from the balanced action of site-specific CTD kinases and phosphatase, and a 'CTD code' that specifies the position of Pol II within the transcription cycle has been proposed. ATX1 seems to regulate phosphorylation statment. 'Ser-2' and 'Ser-5' phosphorylation are repressed by flavopiridol (Flap) and seliciclib (Selic), inhibitors of CDK7 and CDK9.

It localises to the nucleus. It carries out the reaction RNA(n) + a ribonucleoside 5'-triphosphate = RNA(n+1) + diphosphate. Its function is as follows. DNA-dependent RNA polymerase catalyzes the transcription of DNA into RNA using the four ribonucleoside triphosphates as substrates. Largest and catalytic component of RNA polymerase II which synthesizes mRNA precursors and many functional non-coding RNAs. Forms the polymerase active center together with the second largest subunit. Pol II is the central component of the basal RNA polymerase II transcription machinery. It is composed of mobile elements that move relative to each other. NRPB1 is part of the core element with the central large cleft, the clamp element that moves to open and close the cleft and the jaws that are thought to grab the incoming DNA template. At the start of transcription, a single-stranded DNA template strand of the promoter is positioned within the central active site cleft of Pol II. A bridging helix emanates from NRPB1 and crosses the cleft near the catalytic site and is thought to promote translocation of Pol II by acting as a ratchet that moves the RNA-DNA hybrid through the active site by switching from straight to bent conformations at each step of nucleotide addition. During transcription elongation, Pol II moves on the template as the transcript elongates. Elongation is influenced by the phosphorylation status of the C-terminal domain (CTD) of Pol II largest subunit (NRPB1), which serves as a platform for assembly of factors that regulate transcription initiation, elongation, termination and mRNA processing. This chain is DNA-directed RNA polymerase II subunit RPB1, found in Arabidopsis thaliana (Mouse-ear cress).